We begin with the raw amino-acid sequence, 349 residues long: N-formyl peptide receptor 3 (349 aa).

Topologically, residues 1–27 are extracellular; the sequence is METNFSIPLNETEEVLPEPAGHTVLWI. N-linked (GlcNAc...) asparagine glycans are attached at residues Asn4 and Asn10. A helical transmembrane segment spans residues 28 to 50; sequence FSLLVHGVTFIFGVLGNGLVIWV. Residues 51 to 61 lie on the Cytoplasmic side of the membrane; sequence AGFLMTRTVNT. The chain crosses the membrane as a helical span at residues 62 to 83; the sequence is ICYLNLALADFSFSAILPFHMV. The Extracellular portion of the chain corresponds to 84–100; it reads SVAMREKWPFGSFLCKL. A disulfide bridge links Cys98 with Cys176. A helical transmembrane segment spans residues 101–121; the sequence is VHVMIDINLFVSVYLITIIAL. Residues 122-140 are Cytoplasmic-facing; sequence DRCICVLHPAWAQNHRTMS. Residues 141 to 162 traverse the membrane as a helical segment; sequence LAKRVMTGLWILTIVLTLPNFI. Residues 163–205 are Extracellular-facing; that stretch reads FWTTISTTNGDTYCIFNFPFWGDTAVERLNVFITMAKVFLILH. Residues 206–226 form a helical membrane-spanning segment; that stretch reads FIIGFSMPMSIITVCYGIIAA. Over 227 to 242 the chain is Cytoplasmic; the sequence is KIHRNHMIKSSRPLRV. The chain crosses the membrane as a helical span at residues 243 to 266; that stretch reads FAAVVASFFICWFPYELIGILMAV. Over 267–286 the chain is Extracellular; that stretch reads WLKEMLLNGKYKIILVLINP. Residues 287-306 form a helical membrane-spanning segment; sequence TSSLAFFNSCLNPILYVFLG. The Cytoplasmic portion of the chain corresponds to 307-349; that stretch reads SNFQERLIRSLPTSLERALTEVPDSAQTSNTHTTSASPPEETE. A disordered region spans residues 327 to 349; that stretch reads EVPDSAQTSNTHTTSASPPEETE. The segment covering 331–343 has biased composition (polar residues); the sequence is SAQTSNTHTTSAS.

This sequence belongs to the G-protein coupled receptor 1 family.

The protein localises to the cell membrane. In terms of biological role, low affinity receptor for N-formyl-methionyl peptides, which are powerful neutrophils chemotactic factors. Binding of FMLP to the receptor causes activation of neutrophils. This response is mediated via a G-protein that activates a phosphatidylinositol-calcium second messenger system. The chain is N-formyl peptide receptor 3 (FPR3) from Gorilla gorilla gorilla (Western lowland gorilla).